A 1863-amino-acid polypeptide reads, in one-letter code: 5'-3' DNA helicase ZGRF1 (1863 aa).

Disordered regions lie at residues S78–G110, E132–L196, and T300–Q349. Basic and acidic residues predominate over residues V81 to L90. Over residues S92–G105 the composition is skewed to low complexity. 2 stretches are compositionally biased toward polar residues: residues P173 to S185 and T300 to R321. Residues S331 and S445 each carry the phosphoserine modification. Disordered regions lie at residues P460–N496, T524–E545, and G610–P664. Over residues E533–E545 the composition is skewed to basic and acidic residues. C1111, H1113, C1136, and C1144 together coordinate Zn(2+). The GRF-type zinc finger occupies C1111–V1153.

As to quaternary structure, interacts with DNA repair protein RAD51; the interaction promotes RAD51 strand exchange activity. Also interacts with DNA repair proteins EXO1 and BRCA1; the interactions are increased following DNA damage induction.

It localises to the nucleus. The catalysed reaction is ATP + H2O = ADP + phosphate + H(+). It carries out the reaction Couples ATP hydrolysis with the unwinding of duplex DNA at the replication fork by translocating in the 5'-3' direction. This creates two antiparallel DNA single strands (ssDNA). The leading ssDNA polymer is the template for DNA polymerase III holoenzyme which synthesizes a continuous strand.. 5'-3' DNA helicase which is recruited to sites of DNA damage and promotes repair of replication-blocking DNA lesions through stimulation of homologous recombination (HR). Promotes HR by directly stimulating RAD51-mediated strand exchange activity. Not required to load RAD51 at sites of DNA damage but promotes recombinational repair after RAD51 recruitment. Also promotes HR by positively regulating EXO1-mediated DNA end resection of DNA double-strand breaks. Required for recruitment of replication protein RPA2 to DNA damage sites. Promotes the initiation of the G2/M checkpoint but not its maintenance. Catalyzes Holliday junction branch migration and dissociation of D-loops and DNA flaps. The protein is 5'-3' DNA helicase ZGRF1 (Zgrf1) of Mus musculus (Mouse).